We begin with the raw amino-acid sequence, 436 residues long: tRNA(Ile)-lysidine synthase (436 aa).

25 to 30 (SGGLDS) is an ATP binding site.

It belongs to the tRNA(Ile)-lysidine synthase family.

The protein resides in the cytoplasm. The enzyme catalyses cytidine(34) in tRNA(Ile2) + L-lysine + ATP = lysidine(34) in tRNA(Ile2) + AMP + diphosphate + H(+). Ligates lysine onto the cytidine present at position 34 of the AUA codon-specific tRNA(Ile) that contains the anticodon CAU, in an ATP-dependent manner. Cytidine is converted to lysidine, thus changing the amino acid specificity of the tRNA from methionine to isoleucine. This chain is tRNA(Ile)-lysidine synthase, found in Serratia proteamaculans (strain 568).